We begin with the raw amino-acid sequence, 138 residues long: ATP synthase epsilon chain (138 aa).

The protein belongs to the ATPase epsilon chain family. As to quaternary structure, F-type ATPases have 2 components, CF(1) - the catalytic core - and CF(0) - the membrane proton channel. CF(1) has five subunits: alpha(3), beta(3), gamma(1), delta(1), epsilon(1). CF(0) has three main subunits: a, b and c.

The protein localises to the cell inner membrane. In terms of biological role, produces ATP from ADP in the presence of a proton gradient across the membrane. In Methylibium petroleiphilum (strain ATCC BAA-1232 / LMG 22953 / PM1), this protein is ATP synthase epsilon chain.